A 57-amino-acid chain; its full sequence is Metallothionein (57 aa).

The protein belongs to the metallothionein superfamily. Type 14 family.

Functionally, this protein complexes cadmium, zinc and copper. The protein is Metallothionein (mtnA) of Thermostichus vulcanus (Synechococcus vulcanus).